Here is a 305-residue protein sequence, read N- to C-terminus: MIKQRTLKQSIKVTGVGLHSGNKVTLTLRPAMPNTGVVYYRTDLNPAVAFPADPNSVRDTMLCTALINDQGVRISTVEHLNAALAGLGIDNIIIEVDAPEIPIMDGSASPFIYLLLDAGIEEQNAAKKFIRIKEYVRVEDGDKWAEFKPYNGFRLDFTIDFDHPAIGKDVRNYEMNFSAQAFVHQISRARTFGFMKDIEYLQSQGLALGGSLDNAIVLDDYRILNEDGLRFKDELVRHKMLDAIGDLYMAGYNIIGDFKAYKSGHGLNNKLLRAVLANQEAWEFVTFEDKEQVPQGYVAPAQVLI.

The Zn(2+) site is built by His79, His238, and Asp242. His265 acts as the Proton donor in catalysis.

The protein belongs to the LpxC family. It depends on Zn(2+) as a cofactor.

The catalysed reaction is a UDP-3-O-[(3R)-3-hydroxyacyl]-N-acetyl-alpha-D-glucosamine + H2O = a UDP-3-O-[(3R)-3-hydroxyacyl]-alpha-D-glucosamine + acetate. The protein operates within glycolipid biosynthesis; lipid IV(A) biosynthesis; lipid IV(A) from (3R)-3-hydroxytetradecanoyl-[acyl-carrier-protein] and UDP-N-acetyl-alpha-D-glucosamine: step 2/6. Its function is as follows. Catalyzes the hydrolysis of UDP-3-O-myristoyl-N-acetylglucosamine to form UDP-3-O-myristoylglucosamine and acetate, the committed step in lipid A biosynthesis. The sequence is that of UDP-3-O-acyl-N-acetylglucosamine deacetylase from Haemophilus influenzae (strain 86-028NP).